Here is a 158-residue protein sequence, read N- to C-terminus: Endoribonuclease YbeY (158 aa).

3 residues coordinate Zn(2+): His119, His123, and Asp129.

The protein belongs to the endoribonuclease YbeY family. The cofactor is Zn(2+).

The protein localises to the cytoplasm. Its function is as follows. Single strand-specific metallo-endoribonuclease involved in late-stage 70S ribosome quality control and in maturation of the 3' terminus of the 16S rRNA. This Chlamydia abortus (strain DSM 27085 / S26/3) (Chlamydophila abortus) protein is Endoribonuclease YbeY.